A 70-amino-acid polypeptide reads, in one-letter code: Large ribosomal subunit protein bL31 (70 aa).

The Zn(2+) site is built by cysteine 16, cysteine 18, cysteine 37, and cysteine 40.

The protein belongs to the bacterial ribosomal protein bL31 family. Type A subfamily. In terms of assembly, part of the 50S ribosomal subunit. It depends on Zn(2+) as a cofactor.

Binds the 23S rRNA. The protein is Large ribosomal subunit protein bL31 of Shewanella denitrificans (strain OS217 / ATCC BAA-1090 / DSM 15013).